The sequence spans 122 residues: MARIAGVDLPRDKRVEIALTYIYGIGRSRSNEILAKAGVNPDTRVKDLTEEEVSRLREIIDKEYKVEGDLRKEVAMNIKRLMDIGCYRGIRHKRGLPVRGQRTRTNARTRKGPRKTVAKKKK.

Residues 95–122 (GLPVRGQRTRTNARTRKGPRKTVAKKKK) are disordered.

This sequence belongs to the universal ribosomal protein uS13 family. In terms of assembly, part of the 30S ribosomal subunit. Forms a loose heterodimer with protein S19. Forms two bridges to the 50S subunit in the 70S ribosome.

Located at the top of the head of the 30S subunit, it contacts several helices of the 16S rRNA. In the 70S ribosome it contacts the 23S rRNA (bridge B1a) and protein L5 of the 50S subunit (bridge B1b), connecting the 2 subunits; these bridges are implicated in subunit movement. Contacts the tRNAs in the A and P-sites. This Thermoanaerobacter pseudethanolicus (strain ATCC 33223 / 39E) (Clostridium thermohydrosulfuricum) protein is Small ribosomal subunit protein uS13.